The primary structure comprises 130 residues: Small ribosomal subunit protein uS8 (130 aa).

Belongs to the universal ribosomal protein uS8 family. In terms of assembly, part of the 30S ribosomal subunit.

Its function is as follows. One of the primary rRNA binding proteins, it binds directly to 16S rRNA central domain where it helps coordinate assembly of the platform of the 30S subunit. The chain is Small ribosomal subunit protein uS8 from Methanocella arvoryzae (strain DSM 22066 / NBRC 105507 / MRE50).